We begin with the raw amino-acid sequence, 416 residues long: S-adenosylmethionine synthase (416 aa).

Position 16 (histidine 16) interacts with ATP. Aspartate 18 is a Mg(2+) binding site. A K(+)-binding site is contributed by glutamate 44. Residues glutamate 57 and glutamine 100 each coordinate L-methionine. The segment at 100–110 (QSPDISQGVTA) is flexible loop. Residues 175 to 177 (DGK), 251 to 252 (KF), aspartate 260, 266 to 267 (RK), alanine 283, and lysine 287 contribute to the ATP site. Aspartate 260 contributes to the L-methionine binding site. Lysine 291 is an L-methionine binding site.

This sequence belongs to the AdoMet synthase family. In terms of assembly, homotetramer; dimer of dimers. It depends on Mg(2+) as a cofactor. K(+) serves as cofactor.

It is found in the cytoplasm. It catalyses the reaction L-methionine + ATP + H2O = S-adenosyl-L-methionine + phosphate + diphosphate. It participates in amino-acid biosynthesis; S-adenosyl-L-methionine biosynthesis; S-adenosyl-L-methionine from L-methionine: step 1/1. Catalyzes the formation of S-adenosylmethionine (AdoMet) from methionine and ATP. The overall synthetic reaction is composed of two sequential steps, AdoMet formation and the subsequent tripolyphosphate hydrolysis which occurs prior to release of AdoMet from the enzyme. The protein is S-adenosylmethionine synthase of Microcystis aeruginosa (strain NIES-843 / IAM M-2473).